We begin with the raw amino-acid sequence, 412 residues long: Putative F-box protein At3g22940 (412 aa).

In terms of domain architecture, F-box spans M1–A38.

In Arabidopsis thaliana (Mouse-ear cress), this protein is Putative F-box protein At3g22940.